We begin with the raw amino-acid sequence, 257 residues long: Protein YIPF5 (257 aa).

Residues 1-124 (MSGFDNLNSG…RASDGSIMNE (124 aa)) are Cytoplasmic-facing. The interval 75–106 (PPTPQTFYGDSFEEEPPLLEELGINFDHIWQK) is interaction with Sec23. The chain crosses the membrane as a helical span at residues 125 to 145 (TDLAGPVVFCLAFGATLLLAG). Position 146 (Lys146) is a topological domain, lumenal. A helical transmembrane segment spans residues 147–167 (IQFGYVYGISAIGCLGMFCLL). The Cytoplasmic segment spans residues 168 to 173 (NLMSMT). A helical membrane pass occupies residues 174–194 (GVSFGCVASVLGYCLLPMILL). Over 195-196 (SS) the chain is Lumenal. The chain crosses the membrane as a helical span at residues 197–217 (FAVVFSLQGMVGILLTATIIG). Topologically, residues 218-236 (WCSFSASKIFISALAMDGQ) are cytoplasmic. The chain crosses the membrane as a helical span at residues 237-257 (QLLVAYPCALLYGVFALISVF).

The protein belongs to the YIP1 family. Interacts with the COPII coat components Sec23 (SEC23A and/or SEC23B) and Sec24 (SEC24A and/or SEC24B). Interacts with YIF1A. May interact with RAB1A. Interacts with YIPF3 and YIPF4.

Its subcellular location is the endoplasmic reticulum membrane. It localises to the golgi apparatus. The protein localises to the cis-Golgi network membrane. It is found in the cytoplasmic vesicle. The protein resides in the COPII-coated vesicle. Functionally, plays a role in transport between endoplasmic reticulum and Golgi. In pancreatic beta cells, required to transport proinsulin from endoplasmic reticulum into the Golgi. The sequence is that of Protein YIPF5 from Rattus norvegicus (Rat).